Here is a 333-residue protein sequence, read N- to C-terminus: CMP-N-acetylneuraminate-beta-galactosamide-alpha-2,3-sialyltransferase 4 (333 aa).

Residues 1–8 lie on the Cytoplasmic side of the membrane; it reads MVSKSRWK. The helical; Signal-anchor for type II membrane protein transmembrane segment at 9–26 threads the bilayer; the sequence is LLAMLALVLVVMVWYSIS. Topologically, residues 27-333 are lumenal; that stretch reads REDRYIELFY…MGAIKNLTSF (307 aa). 4 N-linked (GlcNAc...) asparagine glycosylation sites follow: N61, N131, N310, and N329. C120 and C273 form a disulfide bridge.

The protein belongs to the glycosyltransferase 29 family. The soluble form derives from the membrane form by proteolytic processing. As to expression, highly expressed in adult placenta, heart and kidney.

Its subcellular location is the golgi apparatus. It localises to the golgi stack membrane. The protein localises to the secreted. The enzyme catalyses a beta-D-galactosyl-(1-&gt;3)-N-acetyl-beta-D-galactosaminyl derivative + CMP-N-acetyl-beta-neuraminate = an N-acetyl-alpha-neuraminyl-(2-&gt;3)-beta-D-galactosyl-(1-&gt;3)-N-acetyl-beta-D-galactosaminyl derivative + CMP + H(+). The catalysed reaction is a beta-D-galactosyl-(1-&gt;3)-N-acetyl-alpha-D-galactosaminyl derivative + CMP-N-acetyl-beta-neuraminate = an N-acetyl-alpha-neuraminyl-(2-&gt;3)-beta-D-galactosyl-(1-&gt;3)-N-acetyl-alpha-D-galactosaminyl derivative + CMP + H(+). It carries out the reaction a beta-D-galactosyl-(1-&gt;4)-N-acetyl-beta-D-glucosaminyl derivative + CMP-N-acetyl-beta-neuraminate = an N-acetyl-alpha-neuraminyl-(2-&gt;3)-beta-D-galactosyl-(1-&gt;4)-N-acetyl-beta-D-glucosaminyl derivative + CMP + H(+). It catalyses the reaction a ganglioside GM1 (d18:1(4E)) + CMP-N-acetyl-beta-neuraminate = a ganglioside GD1a (d18:1(4E)) + CMP + H(+). The enzyme catalyses a ganglioside GA1 (d18:1(4E)) + CMP-N-acetyl-beta-neuraminate = a ganglioside GM1b (d18:1(4E)) + CMP + H(+). The catalysed reaction is a ganglioside GT1c (d18:1(4E)) + CMP-N-acetyl-beta-neuraminate = a ganglioside GQ1c (d18:1(4E)) + CMP + H(+). It carries out the reaction a neolactoside nLc4Cer + CMP-N-acetyl-beta-neuraminate = a neolactoside IV(3)-alpha-NeuAc-nLc4Cer + CMP + H(+). It catalyses the reaction a neolactoside nLc4Cer(d18:1(4E)) + CMP-N-acetyl-beta-neuraminate = a neolactoside IV(3)-alpha-NeuAc-nLc4Cer(d18:1(4E)) + CMP + H(+). The protein operates within protein modification; protein glycosylation. It functions in the pathway glycolipid biosynthesis. A beta-galactoside alpha2-3 sialyltransferase involved in terminal sialylation of glycoproteins and glycolipids. Catalyzes the transfer of sialic acid (N-acetyl-neuraminic acid; Neu5Ac) from the nucleotide sugar donor CMP-Neu5Ac onto acceptor Galbeta-(1-&gt;3)-GalNAc- and Galbeta-(1-&gt;4)-GlcNAc-terminated glycoconjugates through an alpha2-3 linkage. Plays a major role in hemostasis. Responsible for sialylation of plasma VWF/von Willebrand factor, preventing its recognition by asialoglycoprotein receptors (ASGPR) and subsequent clearance. Regulates ASGPR-mediated clearance of platelets. Participates in the biosynthesis of the sialyl Lewis X epitopes, both on O- and N-glycans, which are recognized by SELE/E-selectin, SELP/P-selectin and SELL/L-selectin. Essential for selectin-mediated rolling and adhesion of leukocytes during extravasation. Contributes to adhesion and transendothelial migration of neutrophils likely through terminal sialylation of CXCR2. In glycosphingolipid biosynthesis, sialylates GM1 and GA1 gangliosides to form GD1a and GM1b, respectively. Metabolizes brain c-series ganglioside GT1c forming GQ1c. Synthesizes ganglioside LM1 (IV3Neu5Ac-nLc4Cer), a major structural component of peripheral nerve myelin. The chain is CMP-N-acetylneuraminate-beta-galactosamide-alpha-2,3-sialyltransferase 4 (ST3GAL4) from Homo sapiens (Human).